The sequence spans 1313 residues: Envelopment polyprotein (1313 aa).

An N-terminal signal peptide occupies residues 1–17 (MIFTILNVLTRAMLVMS). Residues 18-712 (MYSLTTWDST…HSTLSAILTS (695 aa)) lie on the Lumenal side of the membrane. N-linked (GlcNAc...) asparagine; by host glycosylation is found at Asn-76 and Asn-102. Positions 178–237 (MQVLMSEIEQLKNQLSKKRNERGQEKRDAEKVMSDLMARNSDLRKHNDILTAEISQMKNK) form a coiled coil. The interval 250-270 (TVVPAILSVALLSSSVAPIIA) is internal signal sequence for glycoprotein N. 12 disulfide bridges follow: Cys-303/Cys-312, Cys-352/Cys-362, Cys-373/Cys-404, Cys-394/Cys-407, Cys-432/Cys-579, Cys-450/Cys-460, Cys-501/Cys-557, Cys-525/Cys-536, Cys-543/Cys-548, Cys-602/Cys-605, Cys-609/Cys-679, and Cys-629/Cys-634. N-linked (GlcNAc...) asparagine; by host glycosylation occurs at Asn-496. A helical membrane pass occupies residues 713–733 (FLLILFIYTVFSVTTNILYVL). The tract at residues 731-773 (YVLRLIPKQLKSPVGWLKLFINWLLTALRIKTRNVMRRINQRI) is golgi retention signal. Residues 734 to 791 (RLIPKQLKSPVGWLKLFINWLLTALRIKTRNVMRRINQRIGWVDHHDVERPRHREPMR) lie on the Cytoplasmic side of the membrane. The interval 769–773 (INQRI) is important for correct targeting of the glycoproteins to the Golgi complex but not for heterodimerization. An internal signal sequence for glycoprotein C region spans residues 793–809 (FKTTLLLTLIMMTGGNA). 12 cysteine pairs are disulfide-bonded: Cys-810–Cys-850, Cys-823–Cys-832, Cys-875–Cys-971, Cys-890–Cys-1084, Cys-896–Cys-944, Cys-902–Cys-951, Cys-907–Cys-933, Cys-937–Cys-942, Cys-1053–Cys-1066, Cys-1148–Cys-1220, Cys-1158–Cys-1161, and Cys-1168–Cys-1202. At 810-1278 (CSNTVVANSK…LDWLGGPMKA (469 aa)) the chain is on the lumenal side. The interval 896–902 (CHLVGDC) is fusion loop. The interval 938–949 (GAIGCGCFNINP) is fusion loop. Asn-1154 carries an N-linked (GlcNAc...) asparagine; by host glycan. A glycan (N-linked (GlcNAc...) asparagine; by host) is linked at Asn-1243. The chain crosses the membrane as a helical span at residues 1279 to 1299 (ILKILGFIAIGIVCFVLFMIL). Topologically, residues 1300–1313 (IRIAVNSINIKKKN) are cytoplasmic.

Belongs to the phlebovirus envelope glycoprotein family. Heterodimer with glycoprotein C. Interacts with nucleocapsid protein N and with the polymerase L in order to package them into virus particles. As to quaternary structure, heterodimer with glycoprotein C. Homotrimer (postfusion). Interacts with nucleocapsid protein N and with the polymerase L in order to package them into virus particles. Interacts with host E3 ubiquitin-protein ligase UBR4; this interaction is important for viral RNA production. In terms of processing, specific enzymatic cleavages in vivo yield mature proteins including NSm protein, Glycoprotein C, and Glycoprotein N. Glycosylated. The glycans can attach to host CD209/DC-SIGN, and may play a role in virus entry into dendritic cells. Post-translationally, palmitoylated.

Its subcellular location is the virion membrane. The protein localises to the host Golgi apparatus membrane. It is found in the host endoplasmic reticulum membrane. In terms of biological role, structural component of the virion that interacts with glycoprotein C. It shields the hydrophobic fusion loops of the glycoprotein C, preventing premature fusion. The glycoprotein protrusions are arranged on an icosahedral lattice, with T=12 triangulation. They are able to attach the virion to the host cell receptor CD209/DC-SIGN and to promote fusion of membranes with the late endosome after endocytosis of the virion. Plays a role in the packaging of ribonucleoproteins and polymerase during virus assembly. Structural component of the virion that interacts with glycoprotein N. Acts as a class II fusion protein that is activated upon acidification and subsequent repositioning of the glycoprotein N. The glycoprotein protrusions are arranged on an icosahedral lattice, with T=12 triangulation. They are able to attach the virion to the host cell receptor CD209/DC-SIGN and to promote fusion of membranes with the late endosome after endocytosis of the virion. Its function is as follows. Plays a role for virus dissemination in mosquitoes. The sequence is that of Envelopment polyprotein (GP) from Homo sapiens (Human).